The chain runs to 354 residues: Trans-L-3-hydroxyproline dehydratase (354 aa).

Cysteine 104 acts as the Proton acceptor in catalysis. Residues glycine 105–histidine 106, aspartate 269, and glycine 274–serine 275 each bind substrate.

Belongs to the proline racemase family. In terms of assembly, homodimer.

It catalyses the reaction trans-3-hydroxy-L-proline = 1-pyrroline-2-carboxylate + H2O. Functionally, catalyzes the dehydration of trans-3-hydroxy-L-proline to delta-1-pyrroline-2-carboxylate (Pyr2C). This chain is Trans-L-3-hydroxyproline dehydratase (L3hypdh), found in Mus musculus (Mouse).